The sequence spans 837 residues: Enterin neuropeptides (837 aa).

Residues 1-25 form the signal peptide; that stretch reads MAKHDVTVMTLLLVVCALHVFDAQG. A propeptide spanning residues 26-47 is cleaved from the precursor; it reads TDVKLNDGFLRSGIMNIPFQRR. Valine amide is present on Val-57. Residues 61–134 constitute a propeptide that is removed on maturation; the sequence is SGFQSPVSPS…ENKRFSKENE (74 aa). Val-146 is modified (valine amide). The propeptide occupies 150–178; that stretch reads MDLSALEKELIAKLKAADLLSPLETEAPG. Leu-190 bears the Leucine amide mark. Residues 194–201 constitute a propeptide that is removed on maturation; that stretch reads MPVDVFPR. Valine amide is present on Val-211. The propeptide occupies 215-234; the sequence is SGNGENYFDDLDTFGDISQR. Residue Val-244 is modified to Valine amide. A propeptide spanning residues 248–266 is cleaved from the precursor; the sequence is GNTDFSRNPLARLSQVQNR. Valine amide is present on Val-276. Residues 280 to 285 constitute a propeptide that is removed on maturation; sequence SVHNIV. Val-297 is subject to Valine amide. Residues 301–325 constitute a propeptide that is removed on maturation; that stretch reads DFEDASEGLDEEEGDIDGYSDDLDV. Val-336, Val-348, Val-360, Val-372, Val-384, Val-396, Val-408, Val-420, Val-432, Val-444, Val-456, Val-468, Val-480, Val-492, Val-504, Val-516, Val-528, and Val-540 each carry valine amide. Residues 544-595 constitute a propeptide that is removed on maturation; sequence ELGEDEINFLKEVDAADISRQLAEEDEKEAMVSVDDKETLSNEEDASEDDFE. Residues 567–594 are disordered; it reads EEDEKEAMVSVDDKETLSNEEDASEDDF. Over residues 584-593 the composition is skewed to acidic residues; sequence SNEEDASEDD. Glu-598 carries the post-translational modification Pyrrolidone carboxylic acid (Glu); in form ENl'. Val-606 is subject to Valine amide. The propeptide occupies 610–627; it reads DEEGDMGVEMEEEMESEK. Position 637 is a leucine amide (Leu-637). A Pyrrolidone carboxylic acid modification is found at Gln-641. Position 649 is a valine amide (Val-649). The residue at position 653 (Gln-653) is a Pyrrolidone carboxylic acid. Valine amide is present on residues Val-661 and Val-673. Residue Gln-677 is modified to Pyrrolidone carboxylic acid. Valine amide occurs at positions 685 and 697. Gln-701 is modified (pyrrolidone carboxylic acid). Val-709 is subject to Valine amide. Residue Gln-713 is modified to Pyrrolidone carboxylic acid. Position 721 is a valine amide (Val-721). Pyrrolidone carboxylic acid is present on Gln-725. Residue Val-733 is modified to Valine amide. Residues 734-837 constitute a propeptide that is removed on maturation; it reads GKRSGAEDID…DSHIMATSST (104 aa). The tract at residues 772 to 837 is disordered; the sequence is GQPAAANEEE…DSHIMATSST (66 aa). A compositionally biased stretch (acidic residues) spans 778 to 791; it reads NEEELQQEAAEESE.

High expression in gut and CNS.

The protein localises to the secreted. In terms of biological role, reduce interneurons B4/5 activity. May play a regulatory role in nonfeeding behaviors. This is Enterin neuropeptides (ENPP) from Aplysia californica (California sea hare).